A 501-amino-acid chain; its full sequence is 2,3-bisphosphoglycerate-independent phosphoglycerate mutase (501 aa).

2 residues coordinate Mn(2+): D12 and S62. The active-site Phosphoserine intermediate is the S62. Substrate contacts are provided by residues H121, 150–151, R182, R188, 253–256, and K322; these read RD and RSDR. Mn(2+) contacts are provided by D389, H393, D430, H431, and H449.

Belongs to the BPG-independent phosphoglycerate mutase family. As to quaternary structure, monomer. The cofactor is Mn(2+).

It catalyses the reaction (2R)-2-phosphoglycerate = (2R)-3-phosphoglycerate. Its pathway is carbohydrate degradation; glycolysis; pyruvate from D-glyceraldehyde 3-phosphate: step 3/5. In terms of biological role, catalyzes the interconversion of 2-phosphoglycerate and 3-phosphoglycerate. The chain is 2,3-bisphosphoglycerate-independent phosphoglycerate mutase from Ehrlichia ruminantium (strain Gardel).